The following is a 229-amino-acid chain: Transmembrane emp24 domain-containing protein 5 (229 aa).

An N-terminal signal peptide occupies residues 1 to 27 (MGDKIWLPFPVLLLAALPPVLLPGAAG). Residues 28–196 (FTPSLDSDFT…IQESNFDRVN (169 aa)) lie on the Lumenal side of the membrane. The GOLD domain occupies 45–126 (KECFYQPMPL…EKVIFFELIL (82 aa)). The helical transmembrane segment at 197-217 (FWSMVNLVVMVVVSAIQVYML) threads the bilayer. Residues 218-229 (KSLFEDKRKSRT) are Cytoplasmic-facing.

This sequence belongs to the EMP24/GP25L family. As to quaternary structure, interacts with TMED9 and TMED10.

It is found in the endoplasmic reticulum membrane. The protein resides in the golgi apparatus. The protein localises to the cis-Golgi network membrane. It localises to the endoplasmic reticulum-Golgi intermediate compartment membrane. Potential role in vesicular protein trafficking, mainly in the early secretory pathway. Required for the maintenance of the Golgi apparatus; involved in protein exchange between Golgi stacks during assembly. Probably not required for COPI-vesicle-mediated retrograde transport. The polypeptide is Transmembrane emp24 domain-containing protein 5 (TMED5) (Homo sapiens (Human)).